The primary structure comprises 102 residues: Small ribosomal subunit protein eS24 (102 aa).

Belongs to the eukaryotic ribosomal protein eS24 family.

The protein is Small ribosomal subunit protein eS24 of Methanococcoides burtonii (strain DSM 6242 / NBRC 107633 / OCM 468 / ACE-M).